The primary structure comprises 100 residues: uncharacterized protein (100 aa).

The next 3 membrane-spanning stretches (helical) occupy residues 9–29, 41–61, and 72–92; these read VYTYILSAVIYSQDLFPSWVV, PYLIHGNSFLFQILQVLITAP, and SIPFIFLALLLSQDFHVFLGI.

The protein resides in the membrane. This is an uncharacterized protein from Saccharomyces cerevisiae (strain ATCC 204508 / S288c) (Baker's yeast).